The chain runs to 363 residues: Fructose-bisphosphate aldolase C-B (363 aa).

R56 and K147 together coordinate substrate. E188 (proton acceptor) is an active-site residue. The Schiff-base intermediate with dihydroxyacetone-P role is filled by K230.

Belongs to the class I fructose-bisphosphate aldolase family. In terms of assembly, homotetramer.

The enzyme catalyses beta-D-fructose 1,6-bisphosphate = D-glyceraldehyde 3-phosphate + dihydroxyacetone phosphate. It participates in carbohydrate degradation; glycolysis; D-glyceraldehyde 3-phosphate and glycerone phosphate from D-glucose: step 4/4. This chain is Fructose-bisphosphate aldolase C-B (aldocb), found in Danio rerio (Zebrafish).